We begin with the raw amino-acid sequence, 361 residues long: MQLLNSCCGKGFDGKKKEKEEPSWRVFSLKELHAATNSFNYDNKLGEGRFGSVYWGQLWDGSQIAVKRLKEWSNREEIDFAVEVEILARIRHKNLLSVRGYCAEGQERLLVYEYMQNLSLVSHLHGQHSAECLLDWTKRMKIAISSAQAIAYLHDHATPHIVHGDVRASNVLLDSEFEARVTDFGYGKLMPDDDTGDGATKAKSNNGYISPECDASGKESETSDVYSFGILLMVLVSGKRPLERLNPTTTRCITEWVLPLVYERNFGEIVDKRLSEEHVAEKLKKVVLVGLMCAQTDPDKRPTMSEVVEMLVNESKEKISELEANPLFKNPYSSNENNREHVAEESSDVILEDKDHQQQQE.

The 290-residue stretch at 39–328 (FNYDNKLGEG…ISELEANPLF (290 aa)) folds into the Protein kinase domain. ATP contacts are provided by residues 45–53 (LGEGRFGSV) and Lys-67. Residue Asp-165 is the Proton acceptor of the active site. 2 disordered regions span residues 195–219 (TGDG…SGKE) and 323–361 (EANP…QQQE). The segment covering 351 to 361 (LEDKDHQQQQE) has biased composition (basic and acidic residues).

This sequence belongs to the protein kinase superfamily. Tyr protein kinase family.

It catalyses the reaction L-tyrosyl-[protein] + ATP = O-phospho-L-tyrosyl-[protein] + ADP + H(+). This Arabidopsis thaliana (Mouse-ear cress) protein is PTI1-like tyrosine-protein kinase At3g15890.